Reading from the N-terminus, the 439-residue chain is Glucan 1,3-beta-glucosidase (439 aa).

The signal sequence occupies residues 1–18 (MLLSLLFLLSTFAFGALT). E227 (proton donor) is an active-site residue. Intrachain disulfides connect C311/C437 and C336/C366. The active-site Nucleophile is the E328.

The protein belongs to the glycosyl hydrolase 5 (cellulase A) family.

Its subcellular location is the secreted. The enzyme catalyses Successive hydrolysis of beta-D-glucose units from the non-reducing ends of (1-&gt;3)-beta-D-glucans, releasing alpha-glucose.. Beta-glucanases participate in the metabolism of beta-glucan, the main structural component of the cell wall. It could also function biosynthetically as a transglycosylase. This Lachancea kluyveri (strain ATCC 58438 / CBS 3082 / BCRC 21498 / NBRC 1685 / JCM 7257 / NCYC 543 / NRRL Y-12651) (Yeast) protein is Glucan 1,3-beta-glucosidase (EXG1).